The chain runs to 158 residues: GAF domain-containing protein A (158 aa).

The region spanning 32–158 is the GAF domain; the sequence is NQIANLANVT…LTQILKLLDN (127 aa).

The protein belongs to the free Met sulfoxide reductase family.

The protein is GAF domain-containing protein A (gafA) of Dictyostelium discoideum (Social amoeba).